Here is a 61-residue protein sequence, read N- to C-terminus: MAKKAMIERWKKPKKYKVREYTRCHICGRPRAVYREFGLCRICFRKLALEGKLPGVRKASW.

Positions 24, 27, 40, and 43 each coordinate Zn(2+).

It belongs to the universal ribosomal protein uS14 family. Zinc-binding uS14 subfamily. As to quaternary structure, part of the 30S ribosomal subunit. Contacts proteins S3 and S10. Zn(2+) serves as cofactor.

Its function is as follows. Binds 16S rRNA, required for the assembly of 30S particles and may also be responsible for determining the conformation of the 16S rRNA at the A site. This is Small ribosomal subunit protein uS14 from Thermotoga maritima (strain ATCC 43589 / DSM 3109 / JCM 10099 / NBRC 100826 / MSB8).